Consider the following 156-residue polypeptide: Guanine deaminase (156 aa).

In terms of domain architecture, CMP/dCMP-type deaminase spans 1 to 132 (MNHETFLKRA…KPAEERTIPF (132 aa)). H53 lines the Zn(2+) pocket. The Proton donor role is filled by E55. Zn(2+)-binding residues include C83 and C86.

This sequence belongs to the cytidine and deoxycytidylate deaminase family. Zn(2+) serves as cofactor.

The catalysed reaction is guanine + H2O + H(+) = xanthine + NH4(+). The protein operates within purine metabolism; guanine degradation; xanthine from guanine: step 1/1. In terms of biological role, catalyzes the hydrolytic deamination of guanine, producing xanthine and ammonia. The polypeptide is Guanine deaminase (guaD) (Bacillus subtilis (strain 168)).